A 257-amino-acid chain; its full sequence is UPF0246 protein Shewana3_3143 (257 aa).

This sequence belongs to the UPF0246 family.

The polypeptide is UPF0246 protein Shewana3_3143 (Shewanella sp. (strain ANA-3)).